The chain runs to 256 residues: tRNA pseudouridine synthase A (256 aa).

The active-site Nucleophile is the Asp55. Tyr113 provides a ligand contact to substrate.

It belongs to the tRNA pseudouridine synthase TruA family. Homodimer.

The catalysed reaction is uridine(38/39/40) in tRNA = pseudouridine(38/39/40) in tRNA. Its function is as follows. Formation of pseudouridine at positions 38, 39 and 40 in the anticodon stem and loop of transfer RNAs. The sequence is that of tRNA pseudouridine synthase A from Limosilactobacillus reuteri (strain DSM 20016) (Lactobacillus reuteri).